Reading from the N-terminus, the 115-residue chain is SOSS complex subunit C homolog (115 aa).

This sequence belongs to the SOSS-C family.

The chain is SOSS complex subunit C homolog from Drosophila grimshawi (Hawaiian fruit fly).